Reading from the N-terminus, the 487-residue chain is Serine/threonine-protein kinase 4 (487 aa).

Met1 bears the N-acetylmethionine mark. Residue Thr3 is modified to Phosphothreonine. Residues 30-281 form the Protein kinase domain; sequence FDVLEKLGEG…ATQLLQHPFV (252 aa). ATP-binding positions include 36 to 44 and Lys59; that span reads LGEGSYGSV. Asp149 functions as the Proton acceptor in the catalytic mechanism. At Thr183 the chain carries Phosphothreonine; by autocatalysis. At Ser265 the chain carries Phosphoserine. Positions 290–310 form a coiled coil; the sequence is LRDLINEAMDVKLKRQESQQR. A compositionally biased stretch (basic and acidic residues) spans 303–312; sequence KRQESQQREV. Residues 303 to 332 are disordered; it reads KRQESQQREVDQDDEENSEEDEMDSGTMVR. The span at 313–326 shows a compositional bias: acidic residues; sequence DQDDEENSEEDEMD. A Phosphoserine modification is found at Ser320. A phosphothreonine mark is found at Thr340 and Thr367. Thr387 carries the post-translational modification Phosphothreonine; by PKB/AKT1. Phosphoserine is present on residues Ser410 and Ser414. Tyr433 carries the phosphotyrosine modification. The SARAH domain occupies 433-480; sequence YEFLKSWTVEDLQKRLLALDPMMEQEIEEIRQKYQSKRQPILDAIEAK.

The protein belongs to the protein kinase superfamily. STE Ser/Thr protein kinase family. STE20 subfamily. As to quaternary structure, homodimer; mediated via the coiled-coil region. Interacts with NORE1, which inhibits autoactivation. Interacts with and stabilizes SAV1. Interacts with RASSF1. Interacts with FOXO3. Interacts with RASSF2 (via SARAH domain). Interacts with AR, PKB/AKT1, TNNI3 and SIRT1. Interacts with DLG5 (via PDZ domain 3). Interacts with MARK3 and SCRIB in the presence of DLG5. Mg(2+) is required as a cofactor. In terms of processing, autophosphorylated on serine and threonine residues. Phosphorylation at Thr-387 by PKB/AKT1, leads to inhibition of its: kinase activity, nuclear translocation and autophosphorylation at Thr-183. It also diminishes its cleavage by caspases and its ability to phosphorylate FOXO3. Post-translationally, proteolytically cleaved by caspase-3 during apoptosis at Asp-326 and Asp-349 resulting in a 37 kDa or a 39 kDa subunit respectively. The 39 kDa subunit is further cleaved into the 37 kDa form. Proteolytic cleavage results in kinase activation and nuclear translocation of the truncated form (MST1/N). It is less likely that cleavage at Asp-349 is a prerequisite for activation as this site is not conserved in the murine ortholog.

The protein resides in the cytoplasm. It is found in the nucleus. It catalyses the reaction L-seryl-[protein] + ATP = O-phospho-L-seryl-[protein] + ADP + H(+). The enzyme catalyses L-threonyl-[protein] + ATP = O-phospho-L-threonyl-[protein] + ADP + H(+). With respect to regulation, inhibited by the C-terminal non-catalytic region. Activated by caspase-cleavage. Full activation also requires homodimerization and autophosphorylation of Thr-183. Activated by RASSF1 which acts by preventing its dephosphorylation. Stress-activated, pro-apoptotic kinase which, following caspase-cleavage, enters the nucleus and induces chromatin condensation followed by internucleosomal DNA fragmentation. Key component of the Hippo signaling pathway which plays a pivotal role in organ size control and tumor suppression by restricting proliferation and promoting apoptosis. The core of this pathway is composed of a kinase cascade wherein STK3/MST2 and STK4/MST1, in complex with its regulatory protein SAV1, phosphorylates and activates LATS1/2 in complex with its regulatory protein MOB1, which in turn phosphorylates and inactivates YAP1 oncoprotein and WWTR1/TAZ. Phosphorylation of YAP1 by LATS2 inhibits its translocation into the nucleus to regulate cellular genes important for cell proliferation, cell death, and cell migration. STK3/MST2 and STK4/MST1 are required to repress proliferation of mature hepatocytes, to prevent activation of facultative adult liver stem cells (oval cells), and to inhibit tumor formation. Phosphorylates 'Ser-14' of histone H2B (H2BS14ph) during apoptosis. Phosphorylates FOXO3 upon oxidative stress, which results in its nuclear translocation and cell death initiation. Phosphorylates MOBKL1A, MOBKL1B and RASSF2. Phosphorylates TNNI3 (cardiac Tn-I) and alters its binding affinity to TNNC1 (cardiac Tn-C) and TNNT2 (cardiac Tn-T). Phosphorylates FOXO1 on 'Ser-212' and regulates its activation and stimulates transcription of PMAIP1 in a FOXO1-dependent manner. Phosphorylates SIRT1 and inhibits SIRT1-mediated p53/TP53 deacetylation, thereby promoting p53/TP53 dependent transcription and apoptosis upon DNA damage. Acts as an inhibitor of PKB/AKT1. Phosphorylates AR on 'Ser-650' and suppresses its activity by intersecting with PKB/AKT1 signaling and antagonizing formation of AR-chromatin complexes. In Colobus guereza (Mantled guereza), this protein is Serine/threonine-protein kinase 4 (STK4).